A 397-amino-acid polypeptide reads, in one-letter code: Cathepsin E (397 aa).

An N-terminal signal peptide occupies residues 1–20; that stretch reads MKPLLVLLLLLLLDLAQAQG. The propeptide at 21 to 59 is activation peptide; it reads ALHRVPLRRHQSLRKKLRAQGQLSEFWRSHNLDMTRLSE. Positions 79–393 constitute a Peptidase A1 domain; that stretch reads YFGTISIGTP…DRGNNQVGLA (315 aa). An N-linked (GlcNAc...) asparagine glycan is attached at Asn-91. The active site involves Asp-97. 2 disulfides stabilise this stretch: Cys-110/Cys-115 and Cys-273/Cys-277. Asp-282 is a catalytic residue. Asn-323 carries an N-linked (GlcNAc...) asparagine glycan.

It belongs to the peptidase A1 family. As to quaternary structure, homodimer; disulfide-linked. In terms of processing, glycosylated. The nature of the carbohydrate chain varies between cell types. In fibroblasts, the proenzyme contains a high mannose-type oligosaccharide, while the mature enzyme contains a complex-type oligosaccharide. In terms of tissue distribution, expressed abundantly in the stomach, club cells and alveolar macrophages of the lung, brain microglia, spleen and activated B-lymphocytes. Not expressed in resting B-lymphocytes.

It is found in the endosome. The catalysed reaction is Similar to cathepsin D, but slightly broader specificity.. In terms of biological role, may have a role in immune function. Probably involved in the processing of antigenic peptides during MHC class II-mediated antigen presentation. May play a role in activation-induced lymphocyte depletion in the thymus, and in neuronal degeneration and glial cell activation in the brain. This chain is Cathepsin E (Ctse), found in Mus musculus (Mouse).